The following is a 244-amino-acid chain: Sepiapterin reductase (244 aa).

Residues 9–15, 40–42, 66–67, and asparagine 93 contribute to the NADP(+) site; these read GAGKGIG, SRT, and DI. Phenylalanine 99 serves as a coordination point for substrate. An NADP(+)-binding site is contributed by threonine 116. 2 residues coordinate substrate: serine 145 and tyrosine 158. NADP(+) contacts are provided by residues tyrosine 158, lysine 162, and 191 to 196; that span reads VYTPMW. Tryptophan 196 serves as a coordination point for substrate.

It belongs to the short-chain dehydrogenases/reductases (SDR) family. Homodimer.

Its subcellular location is the cytoplasm. It catalyses the reaction L-threo-7,8-dihydrobiopterin + NADP(+) = L-sepiapterin + NADPH + H(+). It carries out the reaction L-threo-tetrahydrobiopterin + 2 NADP(+) = 6-pyruvoyl-5,6,7,8-tetrahydropterin + 2 NADPH + 2 H(+). Its activity is regulated as follows. Slightly inhibited by N-acetyldopamine but not by N-acetylserotonin or melatonin. Functionally, catalyzes the final reductions in tetra-hydrobiopterin biosynthesis to form 5,6,7,8-tetrahydrobiopterin. This is Sepiapterin reductase from Chlorobaculum tepidum (strain ATCC 49652 / DSM 12025 / NBRC 103806 / TLS) (Chlorobium tepidum).